The following is a 274-amino-acid chain: Mitochondrial S-adenosylmethionine carrier protein (274 aa).

Solcar repeat units follow at residues Pro-4–Phe-77, Leu-86–Leu-168, and Val-177–Leu-265. 6 helical membrane passes run Gly-5–Phe-25, Ile-49–Ile-69, Tyr-85–Ile-105, Arg-142–Trp-162, Ser-182–Val-202, and Phe-238–Ala-258.

Belongs to the mitochondrial carrier (TC 2.A.29) family. As to expression, widely expressed. Highly expressed in testis, with moderate expression in brain, heart, kidney, lung, skeletal muscle, pancreas, small intestine and liver, and low expression in spleen.

It localises to the mitochondrion inner membrane. It catalyses the reaction S-adenosyl-L-homocysteine(out) + S-adenosyl-L-methionine(in) = S-adenosyl-L-homocysteine(in) + S-adenosyl-L-methionine(out). With respect to regulation, strongly inhibited by tannic acid and Bromocresol Purple. In terms of biological role, mitochondrial S-adenosyl-L-methionine/S-adenosyl-L-homocysteine antiporter. Mediates the exchange of cytosolic S-adenosyl-L-methionine, the predominant methyl-group donor for macromolecule methylation processes, for mitochondrial S-adenosylhomocysteine(SAH), a by-product of methylation reactions. This Homo sapiens (Human) protein is Mitochondrial S-adenosylmethionine carrier protein.